A 60-amino-acid polypeptide reads, in one-letter code: Ras-related protein Rab-2A (60 aa).

GTP-binding residues include Ser-1, Cys-2, and Thr-19. Residue Ser-1 coordinates Mg(2+). The short motif at 16 to 24 is the Effector region element; sequence HDLTIGVEF. Mg(2+) is bound at residue Thr-19.

The protein belongs to the small GTPase superfamily. Rab family. Interacts with PRKCI. Interacts with TRIP11. Interacts (in GTP-bound form) with GARIN1B. Interacts (GTP-bound) with HOPS complex component VPS39; interaction contributes to obtaining a functional HOPS complex that promotes autophagosome-lysosome membrane fusion driven by STX17-SNAP29-VAMP8. May interact with VPS41. Requires Mg(2+) as cofactor. Post-translationally, prenylated. Prenylation is required for association with cellular membranes.

It is found in the endoplasmic reticulum-Golgi intermediate compartment membrane. The protein resides in the melanosome. Its subcellular location is the endoplasmic reticulum membrane. The protein localises to the golgi apparatus membrane. It localises to the cytoplasmic vesicle. It is found in the secretory vesicle. The protein resides in the acrosome. Its subcellular location is the autophagosome membrane. The catalysed reaction is GTP + H2O = GDP + phosphate + H(+). With respect to regulation, regulated by guanine nucleotide exchange factors (GEFs) which promote the exchange of bound GDP for free GTP, GTPase activating proteins (GAPs) which increase the GTP hydrolysis activity, and GDP dissociation inhibitors (GDIs) which inhibit the dissociation of the nucleotide from the GTPase. Its function is as follows. The small GTPases Rab are key regulators of intracellular membrane trafficking, from the formation of transport vesicles to their fusion with membranes. Rabs cycle between active GTP-bound and inactive GDP-bound states. In their active state, drive transport of vesicular carriers from donor organelles to acceptor organelles to regulate the membrane traffic that maintains organelle identity and morphology. RAB2A regulates autophagy by promoting autophagosome-lysosome fusion via recruitment of the HOPS endosomal tethering complex; this process involves autophagosomal RAB2A and lysosomal RAB39A recruitment of HOPS subcomplexes VPS39-VPS11 and VPS41-VPS16-VPS18-VPS33A, respectively, which assemble into a functional complex to mediate membrane tethering and SNAREs-driven membrane fusion. Required for protein transport from the endoplasmic reticulum to the Golgi complex. Regulates the compacted morphology of the Golgi. Together with RAB2B, redundantly required for efficient autophagic flux. The chain is Ras-related protein Rab-2A from Mesocricetus auratus (Golden hamster).